The primary structure comprises 185 residues: Elongation factor P (185 aa).

This sequence belongs to the elongation factor P family.

It is found in the cytoplasm. It participates in protein biosynthesis; polypeptide chain elongation. Its function is as follows. Involved in peptide bond synthesis. Stimulates efficient translation and peptide-bond synthesis on native or reconstituted 70S ribosomes in vitro. Probably functions indirectly by altering the affinity of the ribosome for aminoacyl-tRNA, thus increasing their reactivity as acceptors for peptidyl transferase. The polypeptide is Elongation factor P (Limosilactobacillus reuteri (strain DSM 20016) (Lactobacillus reuteri)).